Here is a 206-residue protein sequence, read N- to C-terminus: MSSDIQDPMAQLVPMVVEQTSKGERSYDIYSRLLKERVIFCCGQVEDHMANLIVAQLLFLESDNPDKDIYLYINSPGGVVTAGMAIYDTMRFIKPDVSTVCMGQAASMGAFLLAGGAQGKRYCLPNSRVMIHQPLGGFQGQASDFEIHAKQILDLKERLNRMLAENTGQDYEKVARDTDRDHFLSAEESIDYGLVDGILRQRGEES.

The Nucleophile role is filled by Ser107. His132 is a catalytic residue.

Belongs to the peptidase S14 family. As to quaternary structure, fourteen ClpP subunits assemble into 2 heptameric rings which stack back to back to give a disk-like structure with a central cavity, resembling the structure of eukaryotic proteasomes.

Its subcellular location is the cytoplasm. The catalysed reaction is Hydrolysis of proteins to small peptides in the presence of ATP and magnesium. alpha-casein is the usual test substrate. In the absence of ATP, only oligopeptides shorter than five residues are hydrolyzed (such as succinyl-Leu-Tyr-|-NHMec, and Leu-Tyr-Leu-|-Tyr-Trp, in which cleavage of the -Tyr-|-Leu- and -Tyr-|-Trp bonds also occurs).. Its function is as follows. Cleaves peptides in various proteins in a process that requires ATP hydrolysis. Has a chymotrypsin-like activity. Plays a major role in the degradation of misfolded proteins. This chain is ATP-dependent Clp protease proteolytic subunit, found in Idiomarina loihiensis (strain ATCC BAA-735 / DSM 15497 / L2-TR).